The primary structure comprises 139 residues: uncharacterized protein (139 aa).

This is an uncharacterized protein from Homo sapiens (Human).